Reading from the N-terminus, the 382-residue chain is Cell division protein FtsZ (382 aa).

GTP is bound by residues 21–25, 108–110, Glu-139, Arg-143, and Asp-187; these read GGGNN and GTG. Positions 320 to 382 are disordered; the sequence is KDVTKPQRPS…TFLRNRNKRG (63 aa). Residues 326 to 341 are compositionally biased toward polar residues; it reads QRPSLNQSIKTHNQSV. Residues 342 to 351 show a composition bias toward basic and acidic residues; it reads PKREPKREEP. A compositionally biased stretch (polar residues) spans 352-365; it reads QQQNTVSRHTSQPA.

This sequence belongs to the FtsZ family. In terms of assembly, homodimer. Polymerizes to form a dynamic ring structure in a strictly GTP-dependent manner. Interacts directly with several other division proteins. Interacts with FtsA. Interacts with Phi29 DNA replication protein 1. Interacts with the cell division inhibitor MciZ.

Its subcellular location is the cytoplasm. During sporulation, is negatively regulated by MciZ, which binds to FtsZ and inhibits its polymerization and the formation of the Z ring. Functionally, essential cell division protein that forms a contractile ring structure (Z ring) at the future cell division site. The regulation of the ring assembly controls the timing and the location of cell division. One of the functions of the FtsZ ring is to recruit other cell division proteins to the septum to produce a new cell wall between the dividing cells. Binds GTP and shows GTPase activity. This Bacillus subtilis (strain 168) protein is Cell division protein FtsZ.